The primary structure comprises 880 residues: Tyrosine-protein kinase receptor TYRO3 (880 aa).

A signal peptide spans 1–30 (MALRRSMGWPGLRPLLLAGLASLLLPGSAA). Ig-like C2-type domains follow at residues 31-118 (AGLK…TKIS) and 129-209 (PFFT…PAIV). Topologically, residues 31–419 (AGLKLMGAPV…QGPPHSRTSW (389 aa)) are extracellular. N53, N75, N181, N220, N230, N283, N356, and N370 each carry an N-linked (GlcNAc...) asparagine glycan. 2 disulfide bridges follow: C54–C107 and C150–C193. 2 Fibronectin type-III domains span residues 217 to 310 (APFN…TKGL) and 315 to 406 (APQN…SHDH). A helical transmembrane segment spans residues 420 to 440 (VPVVLGVLTALITAAALALIL). Residues 441–880 (LRKRRKETRF…QQGLLPHSSC (440 aa)) lie on the Cytoplasmic side of the membrane. Phosphoserine is present on S456. The Protein kinase domain occupies 508 to 785 (FTLGRMLGKG…LENILGHLSV (278 aa)). ATP contacts are provided by residues 514-522 (LGKGEFGSV) and K540. D645 serves as the catalytic Proton acceptor. 4 positions are modified to phosphotyrosine; by autocatalysis: Y671, Y675, Y676, and Y794. A disordered region spans residues 800 to 864 (AEQPTESGSP…QQPESPLNEN (65 aa)). A phosphoserine mark is found at S808 and S859. A compositionally biased stretch (polar residues) spans 849–864 (SPGQLEQQPESPLNEN).

This sequence belongs to the protein kinase superfamily. Tyr protein kinase family. AXL/UFO subfamily. In terms of assembly, monomer and homodimer. Interacts (via N-terminus) with extracellular ligands TULP1 and GAS6. Interacts with PIK3R1; this interaction increases PI3-kinase activity. In terms of processing, autophosphorylated. In terms of tissue distribution, abundant in the brain and lower levels in other tissues.

Its subcellular location is the cell membrane. It carries out the reaction L-tyrosyl-[protein] + ATP = O-phospho-L-tyrosyl-[protein] + ADP + H(+). In terms of biological role, receptor tyrosine kinase that transduces signals from the extracellular matrix into the cytoplasm by binding to several ligands including TULP1 or GAS6. Regulates many physiological processes including cell survival, migration and differentiation. Ligand binding at the cell surface induces dimerization and autophosphorylation of TYRO3 on its intracellular domain that provides docking sites for downstream signaling molecules. Following activation by ligand, interacts with PIK3R1 and thereby enhances PI3-kinase activity. Activates the AKT survival pathway, including nuclear translocation of NF-kappa-B and up-regulation of transcription of NF-kappa-B-regulated genes. TYRO3 signaling plays a role in various processes such as neuron protection from excitotoxic injury, platelet aggregation and cytoskeleton reorganization. Also plays an important role in inhibition of Toll-like receptors (TLRs)-mediated innate immune response by activating STAT1, which selectively induces production of suppressors of cytokine signaling SOCS1 and SOCS3. This Mus musculus (Mouse) protein is Tyrosine-protein kinase receptor TYRO3 (Tyro3).